Consider the following 55-residue polypeptide: uncharacterized protein (55 aa).

Residues 1–25 (MKNNDKKKEVQRKYREEIKKKKQKN) form a disordered region. The helical transmembrane segment at 35-55 (TIIVVTIIVLFIFFTYTLQGF) threads the bilayer.

The protein localises to the membrane. This is an uncharacterized protein from Bacillus subtilis (strain 168).